The primary structure comprises 386 residues: Putative membrane-bound transacylase BcsY (386 aa).

10 helical membrane passes run 37-57 (LAIALVVLFHAGWLKGGFIGV), 91-111 (LLPALLCMVALVSAGMLWWVL), 118-138 (IALNGAYALVYLSNIWASGHV), 156-176 (LSLEMQFYAIIFIMALLLPLT), 181-201 (LVLSAIFSASAAYCAYAWHTG), 237-257 (AVYAAAVAVIVGAGLFYPLSY), 258-278 (ACPSWMTVFPCGAVVLIIMLP), 290-310 (LSPLGVISYSVYLWHWPGIVV), 322-342 (AMMAGVLALVMVVSLLSYVLV), and 362-382 (AALLVAACLGLAAVLAYISHV).

This sequence belongs to the acyltransferase 3 family.

It is found in the cell inner membrane. It functions in the pathway glycan metabolism; bacterial cellulose biosynthesis. In terms of biological role, may acylate a glucose moiety into cellulose fibrils, in cooperation with BcsABII and BcsCII. In Komagataeibacter xylinus (Gluconacetobacter xylinus), this protein is Putative membrane-bound transacylase BcsY (bcsY).